The following is a 75-amino-acid chain: uncharacterized protein (75 aa).

Helical transmembrane passes span 7 to 26 (LINA…AASA) and 36 to 58 (MHLF…FCPV).

Its subcellular location is the cell membrane. This is an uncharacterized protein from Bacillus subtilis (strain 168).